The following is a 93-amino-acid chain: MATFKKFNKDKRPKRNTQSLLFKRKRFCRFTVTGVEEIDYKDVDTLRDFIAENGKIIPARLTGTRAIFQRQLNTAIKRARFLALVPYSDQHKI.

The protein belongs to the bacterial ribosomal protein bS18 family. Part of the 30S ribosomal subunit. Forms a tight heterodimer with protein bS6.

In terms of biological role, binds as a heterodimer with protein bS6 to the central domain of the 16S rRNA, where it helps stabilize the platform of the 30S subunit. The protein is Small ribosomal subunit protein bS18 of Verminephrobacter eiseniae (strain EF01-2).